The sequence spans 467 residues: UPF0236 protein TTE0610/TTE0881/TTE1053/TTE2432 (467 aa).

It belongs to the UPF0236 family.

The protein is UPF0236 protein TTE0610/TTE0881/TTE1053/TTE2432 of Caldanaerobacter subterraneus subsp. tengcongensis (strain DSM 15242 / JCM 11007 / NBRC 100824 / MB4) (Thermoanaerobacter tengcongensis).